Consider the following 474-residue polypeptide: tRNA-2-methylthio-N(6)-dimethylallyladenosine synthase (474 aa).

An MTTase N-terminal domain is found at 3-120 (KKLHIKTWGC…LPEMIDQVQR (118 aa)). Cys-12, Cys-49, Cys-83, Cys-157, Cys-161, and Cys-164 together coordinate [4Fe-4S] cluster. Positions 143–375 (RADGPTAFVS…QDRITQQAMR (233 aa)) constitute a Radical SAM core domain. The region spanning 378 to 441 (RQMLGTVQRI…TNSLRGIFIR (64 aa)) is the TRAM domain.

It belongs to the methylthiotransferase family. MiaB subfamily. In terms of assembly, monomer. It depends on [4Fe-4S] cluster as a cofactor.

The protein resides in the cytoplasm. The enzyme catalyses N(6)-dimethylallyladenosine(37) in tRNA + (sulfur carrier)-SH + AH2 + 2 S-adenosyl-L-methionine = 2-methylsulfanyl-N(6)-dimethylallyladenosine(37) in tRNA + (sulfur carrier)-H + 5'-deoxyadenosine + L-methionine + A + S-adenosyl-L-homocysteine + 2 H(+). Its function is as follows. Catalyzes the methylthiolation of N6-(dimethylallyl)adenosine (i(6)A), leading to the formation of 2-methylthio-N6-(dimethylallyl)adenosine (ms(2)i(6)A) at position 37 in tRNAs that read codons beginning with uridine. The chain is tRNA-2-methylthio-N(6)-dimethylallyladenosine synthase from Shewanella denitrificans (strain OS217 / ATCC BAA-1090 / DSM 15013).